The primary structure comprises 382 residues: Probable dual-specificity RNA methyltransferase RlmN (382 aa).

The active-site Proton acceptor is glutamate 118. The Radical SAM core domain occupies tyrosine 124–aspartate 370. A disulfide bridge links cysteine 131 with cysteine 375. 3 residues coordinate [4Fe-4S] cluster: cysteine 138, cysteine 142, and cysteine 145. S-adenosyl-L-methionine is bound by residues glycine 196–glutamate 197, serine 230, serine 253–histidine 255, and asparagine 332. The active-site S-methylcysteine intermediate is the cysteine 375.

Belongs to the radical SAM superfamily. RlmN family. Requires [4Fe-4S] cluster as cofactor.

Its subcellular location is the cytoplasm. It carries out the reaction adenosine(2503) in 23S rRNA + 2 reduced [2Fe-2S]-[ferredoxin] + 2 S-adenosyl-L-methionine = 2-methyladenosine(2503) in 23S rRNA + 5'-deoxyadenosine + L-methionine + 2 oxidized [2Fe-2S]-[ferredoxin] + S-adenosyl-L-homocysteine. It catalyses the reaction adenosine(37) in tRNA + 2 reduced [2Fe-2S]-[ferredoxin] + 2 S-adenosyl-L-methionine = 2-methyladenosine(37) in tRNA + 5'-deoxyadenosine + L-methionine + 2 oxidized [2Fe-2S]-[ferredoxin] + S-adenosyl-L-homocysteine. Specifically methylates position 2 of adenine 2503 in 23S rRNA and position 2 of adenine 37 in tRNAs. In Kocuria rhizophila (strain ATCC 9341 / DSM 348 / NBRC 103217 / DC2201), this protein is Probable dual-specificity RNA methyltransferase RlmN.